The chain runs to 134 residues: Small ribosomal subunit protein uS8c (134 aa).

This sequence belongs to the universal ribosomal protein uS8 family. In terms of assembly, part of the 30S ribosomal subunit.

Its subcellular location is the plastid. It is found in the chloroplast. Its function is as follows. One of the primary rRNA binding proteins, it binds directly to 16S rRNA central domain where it helps coordinate assembly of the platform of the 30S subunit. In Gossypium barbadense (Sea Island cotton), this protein is Small ribosomal subunit protein uS8c (rps8).